The chain runs to 61 residues: UPF0312 protein (61 aa).

This sequence belongs to the UPF0312 family.

The chain is UPF0312 protein from Delftia acidovorans (Pseudomonas acidovorans).